The primary structure comprises 363 residues: 3-dehydroquinate synthase (363 aa).

NAD(+) contacts are provided by residues 75 to 80, 109 to 113, 133 to 134, lysine 146, lysine 155, and 173 to 176; these read DAEEGK, GAVTD, TS, and TLST. Residues glutamate 188, histidine 251, and histidine 267 each contribute to the Zn(2+) site.

It belongs to the sugar phosphate cyclases superfamily. Dehydroquinate synthase family. Co(2+) serves as cofactor. Zn(2+) is required as a cofactor. The cofactor is NAD(+).

It is found in the cytoplasm. The enzyme catalyses 7-phospho-2-dehydro-3-deoxy-D-arabino-heptonate = 3-dehydroquinate + phosphate. It functions in the pathway metabolic intermediate biosynthesis; chorismate biosynthesis; chorismate from D-erythrose 4-phosphate and phosphoenolpyruvate: step 2/7. In terms of biological role, catalyzes the conversion of 3-deoxy-D-arabino-heptulosonate 7-phosphate (DAHP) to dehydroquinate (DHQ). This chain is 3-dehydroquinate synthase, found in Arthrobacter sp. (strain FB24).